A 119-amino-acid chain; its full sequence is Large ribosomal subunit protein uL22c (119 aa).

It belongs to the universal ribosomal protein uL22 family. Part of the 50S ribosomal subunit.

The protein localises to the plastid. It is found in the chloroplast. In terms of biological role, this protein binds specifically to 23S rRNA. Its function is as follows. The globular domain of the protein is located near the polypeptide exit tunnel on the outside of the subunit, while an extended beta-hairpin is found that lines the wall of the exit tunnel in the center of the 70S ribosome. The sequence is that of Large ribosomal subunit protein uL22c (rpl22) from Angiopteris evecta (Mule's foot fern).